The following is a 90-amino-acid chain: U7-theraphotoxin-Hhn1a 7 (90 aa).

An N-terminal signal peptide occupies residues 1–19 (MKTAIFTVVLALAVFAVLS). Residues 20–50 (FGWEANEKALSEGFTELIHEKEAASETEARE) constitute a propeptide that is removed on maturation. Disulfide bonds link C51-C65, C58-C70, and C64-C81.

This sequence belongs to the neurotoxin 10 (Hwtx-1) family. 13 (Hntx-13) subfamily. In terms of tissue distribution, expressed by the venom gland.

It localises to the secreted. In terms of biological role, ion channel inhibitor. This Cyriopagopus hainanus (Chinese bird spider) protein is U7-theraphotoxin-Hhn1a 7.